The following is a 281-amino-acid chain: uncharacterized protein (281 aa).

The protein localises to the plastid. It localises to the chloroplast. This is an uncharacterized protein from Euglena gracilis.